Here is a 264-residue protein sequence, read N- to C-terminus: Purine nucleoside phosphorylase slr1573 (264 aa).

Residues His61, Cys104, and His121 each coordinate Zn(2+).

This sequence belongs to the purine nucleoside phosphorylase YfiH/LACC1 family. Homodimer. Cu(2+) serves as cofactor. The cofactor is Zn(2+).

The enzyme catalyses adenosine + phosphate = alpha-D-ribose 1-phosphate + adenine. The catalysed reaction is S-methyl-5'-thioadenosine + phosphate = 5-(methylsulfanyl)-alpha-D-ribose 1-phosphate + adenine. It catalyses the reaction inosine + phosphate = alpha-D-ribose 1-phosphate + hypoxanthine. It carries out the reaction adenosine + H2O + H(+) = inosine + NH4(+). Purine nucleoside enzyme that catalyzes the phosphorolysis of adenosine and inosine nucleosides, yielding D-ribose 1-phosphate and the respective free bases, adenine and hypoxanthine. Also catalyzes the phosphorolysis of S-methyl-5'-thioadenosine into adenine and S-methyl-5-thio-alpha-D-ribose 1-phosphate. Also has adenosine deaminase activity. In Synechocystis sp. (strain ATCC 27184 / PCC 6803 / Kazusa), this protein is Purine nucleoside phosphorylase slr1573.